The primary structure comprises 159 residues: Ribosomal RNA large subunit methyltransferase H (159 aa).

S-adenosyl-L-methionine contacts are provided by residues Leu76, Gly108, and 127–132; that span reads FSKMTL.

This sequence belongs to the RNA methyltransferase RlmH family. As to quaternary structure, homodimer.

It localises to the cytoplasm. The catalysed reaction is pseudouridine(1915) in 23S rRNA + S-adenosyl-L-methionine = N(3)-methylpseudouridine(1915) in 23S rRNA + S-adenosyl-L-homocysteine + H(+). Functionally, specifically methylates the pseudouridine at position 1915 (m3Psi1915) in 23S rRNA. The sequence is that of Ribosomal RNA large subunit methyltransferase H from Bacillus thuringiensis subsp. konkukian (strain 97-27).